A 543-amino-acid polypeptide reads, in one-letter code: ATP-dependent ubiquitin transferase-like protein Cap2 (543 aa).

The E2-like domain stretch occupies residues 1–159; it reads MSSAAAVADV…QNCIVAHANG (159 aa). Catalysis depends on C84, which acts as the For E2-like domain. Residues 160–305 are linker domain; it reads CPLWFITDNE…YLAQRNMPNS (146 aa). The adenylation plus E1-like domain stretch occupies residues 306–543; that stretch reads KTLAGKNIAV…RDRECPLCNS (238 aa). Catalysis depends on for E1-like domain residues C450 and C453.

It in the C-terminal section; belongs to the HesA/MoeB/ThiF family. Forms a Cap2-CdnA complex. A Cap2 dimer is bound on either side by a CdnA monomer.

In terms of biological role, CD-NTase priming component of a CBASS antiviral system. CBASS (cyclic oligonucleotide-based antiphage signaling system) provides immunity against bacteriophages. The CD-NTase protein (CdnA) synthesizes cyclic nucleotides in response to infection; these serve as specific second messenger signals. The signals activate a diverse range of effectors, leading to bacterial cell death and thus abortive phage infection. A type II-A(GA) CBASS system. Acts as a protein transferase, conjugating CdnA, the CD-NTase, to unidentified target(s) in the cell probably via an E1-E2 ubiquitin transferase-like mechanism. This primes CdnA, upon phage infection CdnA activates and makes cyclic nucleotides. Protein conjugation requires ATP. Its function is as follows. The capV-cdnA-cap2-cap3 operon provides about 10(4)-fold protection in strain BWHPSA011 against infection by phage PaMx41. In P.aeruginosa strain PAO1 it confers protection against phages PaMx41 and JBD18 but not JBD67 (JBD18 and JBD67 do not replicate in BWHPSA011 / Pa011). When acb2 in JBD67 is deleted this CBASS operon then protects against JDB67 also. This CBASS system limits prophage induction of lysogenized JBD67 as well as viral lytic replication. The protein is ATP-dependent ubiquitin transferase-like protein Cap2 of Pseudomonas aeruginosa (strain BWHPSA011 / Pa011).